The primary structure comprises 138 residues: Transcription antitermination protein NusB (138 aa).

The protein belongs to the NusB family.

In terms of biological role, involved in transcription antitermination. Required for transcription of ribosomal RNA (rRNA) genes. Binds specifically to the boxA antiterminator sequence of the ribosomal RNA (rrn) operons. The polypeptide is Transcription antitermination protein NusB (Coxiella burnetii (strain CbuK_Q154) (Coxiella burnetii (strain Q154))).